Reading from the N-terminus, the 243-residue chain is DNA repair protein RecO (243 aa).

This sequence belongs to the RecO family.

Involved in DNA repair and RecF pathway recombination. The polypeptide is DNA repair protein RecO (Beutenbergia cavernae (strain ATCC BAA-8 / DSM 12333 / CCUG 43141 / JCM 11478 / NBRC 16432 / NCIMB 13614 / HKI 0122)).